A 119-amino-acid chain; its full sequence is Multidrug resistance protein EbrB (119 aa).

Helical transmembrane passes span 3 to 23, 31 to 51, 59 to 79, and 81 to 101; these read GMIFLAAAILSEVFGSTMLKL, LPAAGVIIGFAASFTFLSFSL, AYATWAGTGTALTAAIGHFIF, and EPFNLKTLIGLTLIIGGVFLL.

It belongs to the drug/metabolite transporter (DMT) superfamily. Small multidrug resistance (SMR) (TC 2.A.7.1) family. EbrA/EbrB subfamily. In terms of assembly, the efflux pump is composed of EbrA and EbrB.

The protein localises to the cell membrane. In terms of biological role, part of a multidrug efflux pump. Confers resistance to cationic lipophilic dyes such as ethidium bromide, acriflavine, pyronine Y and safranin O. The efflux is probably coupled to an influx of protons. The protein is Multidrug resistance protein EbrB (ebrB) of Bacillus licheniformis (strain ATCC 14580 / DSM 13 / JCM 2505 / CCUG 7422 / NBRC 12200 / NCIMB 9375 / NCTC 10341 / NRRL NRS-1264 / Gibson 46).